A 538-amino-acid polypeptide reads, in one-letter code: Phosphatidylethanolamine transferase Mcr-2 (538 aa).

Helical transmembrane passes span 14-34 (PFVLMGLVALFLAATANLTFF), 47-67 (LGFIISMAVAVMGAMLLIVVL), 72-92 (YVLKPVLILLLIMGAVTSYFT), 121-141 (LAFFVRIIGLGVLPSVLVAVA), and 161-181 (VSLVLLLVPIGLFSSQYASFF). Zn(2+) is bound by residues glutamate 244 and threonine 283. Intrachain disulfides connect cysteine 279/cysteine 289, cysteine 354/cysteine 362, and cysteine 412/cysteine 420. Threonine 283 carries the post-translational modification Phosphothreonine. Zn(2+) is bound by residues aspartate 463 and histidine 464.

It belongs to the phosphoethanolamine transferase family. Monomer. Phosphorylated at Thr-283; may represent an intermediate in the catalytic mechanism.

The protein resides in the cell inner membrane. The catalysed reaction is lipid A (E. coli) + a 1,2-diacyl-sn-glycero-3-phosphoethanolamine + H(+) = lipid A 4'-(2-aminoethyl diphosphate) (E. coli) + a 1,2-diacyl-sn-glycerol. Its function is as follows. Probably catalyzes the addition of a phosphoethanolamine moiety to lipid A. Phosphoethanolamine modification of lipid A confers polymyxin resistance. Confers resistance to polymyxin-type antibiotics such as colistin. The protein is Phosphatidylethanolamine transferase Mcr-2 of Escherichia coli.